The chain runs to 148 residues: SsrA-binding protein (148 aa).

Residues 123-148 are disordered; that stretch reads KLHDKRETEKKRDWEREKARIMRSAT. A compositionally biased stretch (basic and acidic residues) spans 126–142; the sequence is DKRETEKKRDWEREKAR.

Belongs to the SmpB family.

The protein resides in the cytoplasm. Functionally, required for rescue of stalled ribosomes mediated by trans-translation. Binds to transfer-messenger RNA (tmRNA), required for stable association of tmRNA with ribosomes. tmRNA and SmpB together mimic tRNA shape, replacing the anticodon stem-loop with SmpB. tmRNA is encoded by the ssrA gene; the 2 termini fold to resemble tRNA(Ala) and it encodes a 'tag peptide', a short internal open reading frame. During trans-translation Ala-aminoacylated tmRNA acts like a tRNA, entering the A-site of stalled ribosomes, displacing the stalled mRNA. The ribosome then switches to translate the ORF on the tmRNA; the nascent peptide is terminated with the 'tag peptide' encoded by the tmRNA and targeted for degradation. The ribosome is freed to recommence translation, which seems to be the essential function of trans-translation. This Burkholderia pseudomallei (strain 1710b) protein is SsrA-binding protein.